The sequence spans 106 residues: 3-phenylpropionate/cinnamic acid dioxygenase ferredoxin subunit (106 aa).

Positions Ile-4–Ile-99 constitute a Rieske domain. [2Fe-2S] cluster contacts are provided by Cys-42, His-44, Cys-62, and His-65.

This sequence belongs to the bacterial ring-hydroxylating dioxygenase ferredoxin component family. As to quaternary structure, this dioxygenase system consists of four proteins: the two subunits of the hydroxylase component (HcaE and HcaF), a ferredoxin (HcaC) and a ferredoxin reductase (HcaD). [2Fe-2S] cluster is required as a cofactor.

It functions in the pathway aromatic compound metabolism; 3-phenylpropanoate degradation. Its function is as follows. Part of the multicomponent 3-phenylpropionate dioxygenase, that converts 3-phenylpropionic acid (PP) and cinnamic acid (CI) into 3-phenylpropionate-dihydrodiol (PP-dihydrodiol) and cinnamic acid-dihydrodiol (CI-dihydrodiol), respectively. This protein seems to be a 2Fe-2S ferredoxin. This chain is 3-phenylpropionate/cinnamic acid dioxygenase ferredoxin subunit, found in Shigella flexneri serotype 5b (strain 8401).